The following is an 837-amino-acid chain: MMSASRLAGTLIPAMAFLSCVRPESWEPCVVPNITYQCMELNFYKIPDNLPFSTKNLDLSFNPLRHLGSYSFFSFPELQVLDLSRCEIQTIEDGAYQSLSHLSTLILTGNPIQSLALGAFSGLSSLQKLVAVETNLASLENFPIGHLKTLKELNVAHNLIQSFKLPEYFSNLTNLEYLDLSSNKIQSIYCTDLRVLHQMPLLNLSLDLSLNPMTFIQPGAFKEIRLHKLTLRNNFDSLNVMKTCIQGLAGLEVRRLVLGEFRNEGNLEKFDKSALEGLCNLTIEEFRLAYLDYYLDDIIDLFNCLTNVSSFSLVSVTIERVKDFSYNFGWQHLELVNCKFGQFPTLKLKSLKRLTFTSNKGGNAFSEVDLPSLEFLDLSRNGLSFKGCCSQSDFGTTSLKYLDLSFNGVITMSSNFLGLEQLEHLDFQHSNLKQMSEFSVFLSLRNLIYLDISHTHTRVAFNGIFNGLSSLEVLKMAGNSFQENFLPDIFTELRNLTFLDLSQCQLEQLSPTAFNSLSSLQVLNMSHNNFFSLDTFPYKCLNSLRVLDYSLNHIMTSKKQELQHFPSSLAFLNLTQNDFACTCEHQSFLQWIKDQRQLLVEVERMECATPSDKQGMPVLSLNITCQMNKTIIGVSVLSVLVVSVVAVLVYKFYFHLMLLAGCIKYGRGENVYDAFVIYSSQDEDWVRNELVKNLEEGVPPFQLCLHYRDFIPGVAIAANIIHEGFHKSRKVIVVVSQHFIQSRWCIFEYEIAQTWQFLSSRAGIIFIVLQKVEKTLLRQQVELYRLLSRNTYLEWEDSVLGRHIFWRRLRKALLDGKSWNPEGTVGTGCNWQEATSI.

Residues 1 to 23 (MMSASRLAGTLIPAMAFLSCVRP) form the signal peptide. The Extracellular segment spans residues 24-629 (ESWEPCVVPN…SLNITCQMNK (606 aa)). A disulfide bond links cysteine 29 and cysteine 38. Residue asparagine 33 is glycosylated (N-linked (GlcNAc...) asparagine). LRR repeat units lie at residues 53–74 (STKN…SFFS), 77–98 (ELQV…AYQS), 101–122 (HLST…AFSG), 125–146 (SLQK…PIGH), and 149–170 (TLKE…EYFS). N-linked (GlcNAc...) asparagine glycosylation occurs at asparagine 171. LRR repeat units lie at residues 174-197 (NLEY…RVLH), 203-223 (NLSL…AFKE), and 225-245 (RLHK…KTCI). The N-linked (GlcNAc...) asparagine glycan is linked to asparagine 203. A disulfide bond links cysteine 279 and cysteine 304. N-linked (GlcNAc...) asparagine glycans are attached at residues asparagine 280 and asparagine 307. 10 LRR repeats span residues 329 to 349 (GWQH…LKLK), 350 to 371 (SLKR…VDLP), 372 to 392 (SLEF…CSQS), 398 to 420 (SLKY…LGLE), 421 to 442 (QLEH…SVFL), 446 to 454 (NLIYLDISH), 470 to 493 (SLEV…FTEL), 495 to 516 (NLTF…AFNS), 519 to 540 (SLQV…PYKC), and 543 to 563 (SLRV…QELQ). Cysteine 388 and cysteine 389 are joined by a disulfide. N-linked (GlcNAc...) asparagine glycans are attached at residues asparagine 495 and asparagine 524. N-linked (GlcNAc...) asparagine glycosylation occurs at asparagine 573. The LRRCT domain maps to 577–627 (NDFACTCEHQSFLQWIKDQRQLLVEVERMECATPSDKQGMPVLSLNITCQM). Cystine bridges form between cysteine 581-cysteine 607 and cysteine 583-cysteine 625. Asparagine 622 and asparagine 628 each carry an N-linked (GlcNAc...) asparagine glycan. Residues 630 to 650 (TIIGVSVLSVLVVSVVAVLVY) traverse the membrane as a helical segment. Residues 651–837 (KFYFHLMLLA…GCNWQEATSI (187 aa)) lie on the Cytoplasmic side of the membrane. The TIR domain maps to 670 to 813 (NVYDAFVIYS…IFWRRLRKAL (144 aa)).

This sequence belongs to the Toll-like receptor family. As to quaternary structure, belongs to the lipopolysaccharide (LPS) receptor, a multi-protein complex containing at least CD14, LY96 and TLR4. Binding to bacterial LPS leads to homodimerization. Interacts with LY96 via the extracellular domain. Interacts with MYD88 and TIRAP via their respective TIR domains. Interacts with TICAM2. Interacts with NOX4. Interacts with CNPY3 and HSP90B1; this interaction is required for proper folding in the endoplasmic reticulum. Interacts with MAP3K21; this interaction leads to negative regulation of TLR4 signaling. Interacts with CD36, following CD36 stimulation by oxLDL or amyloid-beta 42, and forms a heterodimer with TLR6. The trimeric complex is internalized and triggers inflammatory response. LYN kinase activity facilitates TLR4-TLR6 heterodimerization and signal initiation. Interacts with TICAM1 in response to LPS in a WDFY1-dependent manner. Interacts with WDFY1 in response to LPS. Interacts with SMPDL3B. Interacts with CEACAM1; upon lipopolysaccharide stimulation, forms a complex including TLR4 and the phosphorylated form of SYK and CEACAM1, which in turn, recruits PTPN6 that dephosphorylates SYK, reducing the production of reactive oxygen species (ROS) and lysosome disruption, which in turn, reduces the activity of the inflammasome. Interacts with RFTN1; the interaction occurs in response to lipopolysaccharide stimulation. Interacts with SCIMP; the interaction occurs in response to lipopolysaccharide stimulation and is enhanced by phosphorylation of SCIMP by LYN. This interaction facilitates the phosphorylation of TLR4 by LYN which elicits a selective cytokine response in macrophages. Interacts with TRAF3IP3. Interacts with TREM1; this interaction enhances TLR4-mediated inflammatory response. Interacts with ZG16B/PAUF. Interacts with CD82; this interaction inhibits TLR4-mediated signaling pathway. Phosphorylated on tyrosine residues by LYN after binding lipopolysaccharide. In terms of processing, ubiquitinated by RNF128 via 'Lys-28'-linked polyubiquitin chains, leading to proteasomal degradation.

Its subcellular location is the cell membrane. It localises to the early endosome. It is found in the cell projection. The protein resides in the ruffle. In terms of biological role, transmembrane receptor that functions as a pattern recognition receptor recognizing pathogen- and damage-associated molecular patterns (PAMPs and DAMPs) to induce innate immune responses via downstream signaling pathways. At the plasma membrane, cooperates with LY96 to mediate the innate immune response to bacterial lipopolysaccharide (LPS). Also involved in LPS-independent inflammatory responses triggered by free fatty acids, such as palmitate, and Ni(2+). Mechanistically, acts via MYD88, TIRAP and TRAF6, leading to NF-kappa-B activation, cytokine secretion and the inflammatory response. Alternatively, CD14-mediated TLR4 internalization via endocytosis is associated with the initiation of a MYD88-independent signaling via the TICAM1-TBK1-IRF3 axis leading to type I interferon production. In addition to the secretion of proinflammatory cytokines, initiates the activation of NLRP3 inflammasome and formation of a positive feedback loop between autophagy and NF-kappa-B signaling cascade. In complex with TLR6, promotes inflammation in monocytes/macrophages by associating with TLR6 and the receptor CD86. Upon ligand binding, such as oxLDL or amyloid-beta 42, the TLR4:TLR6 complex is internalized and triggers inflammatory response, leading to NF-kappa-B-dependent production of CXCL1, CXCL2 and CCL9 cytokines, via MYD88 signaling pathway, and CCL5 cytokine, via TICAM1 signaling pathway. In myeloid dendritic cells, vesicular stomatitis virus glycoprotein G but not LPS promotes the activation of IRF7, leading to type I IFN production in a CD14-dependent manner. The sequence is that of Toll-like receptor 4 (TLR4) from Gorilla gorilla gorilla (Western lowland gorilla).